We begin with the raw amino-acid sequence, 170 residues long: Cathelicidin antimicrobial peptide (170 aa).

The first 30 residues, 1–30 (MKTQRDSPSLGRWSLVLLLLGLVMPLAIVA), serve as a signal peptide directing secretion. The propeptide at 31–131 (QVLSYQEAVL…DISCDKDNRR (101 aa)) is cathelin-like domain (CLD). Cystine bridges form between cysteine 86–cysteine 97 and cysteine 108–cysteine 125. An active core region spans residues 150–162 (FKRIVQRIKDFLQ).

This sequence belongs to the cathelicidin family. Monomer, homodimer or homotrimer (in vitro). Oligomerizes as tetra- or hexamer in solution (in vitro). In terms of processing, proteolytically cleaved by proteinase PRTN3 into antibacterial peptide LL-37. Proteolytically cleaved by cathepsin CTSG and neutrophil elastase ELANE. Post-translationally, resistant to proteolytic degradation in solution, and when bound to both zwitterionic (mimicking mammalian membranes) and negatively charged membranes (mimicking bacterial membranes). After secretion onto the skin surface, the CAMP gene product is processed by a serine protease-dependent mechanism into multiple novel antimicrobial peptides distinct from and shorter than cathelicidin LL-37. These peptides show enhanced antimicrobial action, acquiring the ability to kill skin pathogens such as S.aureus, E.coli and C.albicans. These peptides have lost the ability to stimulate CXCL8/IL8 release from keratinocytes. The peptides act synergistically, killing bacteria at lower concentrations when present together, and maintain activity at increased salt condition.

Its subcellular location is the secreted. It is found in the vesicle. Functionally, antimicrobial protein that is an integral component of the innate immune system. Binds to bacterial lipopolysaccharides (LPS). Acts via neutrophil N-formyl peptide receptors to enhance the release of CXCL2. Postsecretory processing generates multiple cathelicidin antimicrobial peptides with various lengths which act as a topical antimicrobial defense in sweat on skin. The unprocessed precursor form, cathelicidin antimicrobial peptide, inhibits the growth of Gram-negative E.coli and E.aerogenes with efficiencies comparable to that of the mature peptide LL-37 (in vitro). In terms of biological role, antimicrobial peptide that is an integral component of the innate immune system. Binds to bacterial lipopolysaccharides (LPS). Causes membrane permeabilization by forming transmembrane pores (in vitro). Causes lysis of E.coli. Exhibits antimicrobial activity against Gram-negative bacteria such as P.aeruginosa, S.typhimurium, E.aerogenes, E.coli and P.syringae, Gram-positive bacteria such as L.monocytogenes, S.epidermidis, S.pyogenes and S.aureus, as well as vancomycin-resistant enterococci (in vitro). Exhibits antimicrobial activity against methicillin-resistant S.aureus, P.mirabilis, and C.albicans in low-salt media, but not in media containing 100 mM NaCl (in vitro). Forms chiral supramolecular assemblies with quinolone signal (PQS) molecules of P.aeruginosa, which may lead to interference of bacterial quorum signaling and perturbance of bacterial biofilm formation. May form supramolecular fiber-like assemblies on bacterial membranes. Induces cytokine and chemokine producation as well as TNF/TNFA and CSF2/GMCSF production in normal human keratinocytes. Exhibits hemolytic activity against red blood cells. Its function is as follows. Exhibits antimicrobial activity against E.coli and B.megaterium (in vitro). The chain is Cathelicidin antimicrobial peptide from Nomascus concolor (Black crested gibbon).